Reading from the N-terminus, the 447-residue chain is Na(+)-translocating NADH-quinone reductase subunit A (447 aa).

Belongs to the NqrA family. In terms of assembly, composed of six subunits; NqrA, NqrB, NqrC, NqrD, NqrE and NqrF.

It catalyses the reaction a ubiquinone + n Na(+)(in) + NADH + H(+) = a ubiquinol + n Na(+)(out) + NAD(+). Functionally, NQR complex catalyzes the reduction of ubiquinone-1 to ubiquinol by two successive reactions, coupled with the transport of Na(+) ions from the cytoplasm to the periplasm. NqrA to NqrE are probably involved in the second step, the conversion of ubisemiquinone to ubiquinol. This chain is Na(+)-translocating NADH-quinone reductase subunit A, found in Yersinia pestis.